The chain runs to 545 residues: CTP synthase (545 aa).

The amidoligase domain stretch occupies residues 1-266 (MTTNYIFVTG…DDYICKRFSL (266 aa)). Serine 14 provides a ligand contact to CTP. Serine 14 is a binding site for UTP. Residues 15-20 (SLGKGI) and aspartate 72 each bind ATP. Mg(2+) contacts are provided by aspartate 72 and glutamate 140. CTP contacts are provided by residues 147 to 149 (DIE), 187 to 192 (KTKPTQ), and lysine 223. Residues 187–192 (KTKPTQ) and lysine 223 each bind UTP. 239–241 (KDV) lines the ATP pocket. In terms of domain architecture, Glutamine amidotransferase type-1 spans 291–542 (TIGMIGKYVE…VKAAGEYQKR (252 aa)). Glycine 352 serves as a coordination point for L-glutamine. Residue cysteine 379 is the Nucleophile; for glutamine hydrolysis of the active site. L-glutamine contacts are provided by residues 380–383 (LGMQ), glutamate 403, and arginine 470. Active-site residues include histidine 515 and glutamate 517.

Belongs to the CTP synthase family. Homotetramer.

It carries out the reaction UTP + L-glutamine + ATP + H2O = CTP + L-glutamate + ADP + phosphate + 2 H(+). It catalyses the reaction L-glutamine + H2O = L-glutamate + NH4(+). The enzyme catalyses UTP + NH4(+) + ATP = CTP + ADP + phosphate + 2 H(+). The protein operates within pyrimidine metabolism; CTP biosynthesis via de novo pathway; CTP from UDP: step 2/2. Its activity is regulated as follows. Allosterically activated by GTP, when glutamine is the substrate; GTP has no effect on the reaction when ammonia is the substrate. The allosteric effector GTP functions by stabilizing the protein conformation that binds the tetrahedral intermediate(s) formed during glutamine hydrolysis. Inhibited by the product CTP, via allosteric rather than competitive inhibition. Catalyzes the ATP-dependent amination of UTP to CTP with either L-glutamine or ammonia as the source of nitrogen. Regulates intracellular CTP levels through interactions with the four ribonucleotide triphosphates. This Yersinia enterocolitica serotype O:8 / biotype 1B (strain NCTC 13174 / 8081) protein is CTP synthase.